Reading from the N-terminus, the 586-residue chain is MFS-type transporter ucsD (586 aa).

Residues 1–56 (MSRNSGTTLEDGPLHADPTTEAPNNATVTTNVTANDENTEKEVDADAAAAAPAEAP) form a disordered region. Low complexity-rich tracts occupy residues 19-36 (TTEA…TAND) and 46-56 (DAAAAAPAEAP). N-linked (GlcNAc...) asparagine glycans are attached at residues asparagine 25 and asparagine 31. 8 helical membrane-spanning segments follow: residues 65 to 85 (WAIV…GTII), 101 to 121 (SFIW…PLMA), 131 to 151 (WLTL…GGAN), 164 to 184 (GFGG…LVPL), 192 to 212 (GIVQ…GGLL), 220 to 240 (WVFY…FFFL), 263 to 283 (AIFI…GAVY), and 290 to 310 (VIVP…YEWT). A glycan (N-linked (GlcNAc...) asparagine) is linked at asparagine 324. The next 6 membrane-spanning stretches (helical) occupy residues 330-350 (VLGV…FMPI), 368-388 (LPLF…LAKF), 393-413 (PMHL…SLLD), 420-440 (AWAC…AILL), 458-478 (VWTF…SAIF), and 532-552 (LRTV…LIWL).

This sequence belongs to the major facilitator superfamily.

The protein resides in the membrane. In terms of biological role, MFS-type transporter; part of the gene cluster that mediates the biosynthesis of UCS1025A, a member of the pyrrolizidinone family that acts as a strong telomerase inhibitor and displays potent antibacterial and antitumor properties. These compounds share a hemiaminal-containing pyrrolizidinone core fused with a gamma-lactone, giving a furopyrrolizidine that is connected to a decalin fragment. The sequence is that of MFS-type transporter ucsD from Acremonium sp.